Reading from the N-terminus, the 101-residue chain is uncharacterized protein (101 aa).

Basic residues predominate over residues 1 to 12 (MAAFQHRAKRSK). Disordered stretches follow at residues 1–30 (MAAF…KKRA) and 65–87 (AQDQ…NVDK). The span at 65–78 (AQDQRSDAQAQQQR) shows a compositional bias: low complexity.

This is an uncharacterized protein from Eremothecium gossypii (strain ATCC 10895 / CBS 109.51 / FGSC 9923 / NRRL Y-1056) (Yeast).